A 437-amino-acid polypeptide reads, in one-letter code: Transcription factor E2F1 (437 aa).

Disordered stretches follow at residues 42–87 (ASAP…GRPP) and 101–128 (LAESSGPARGRGRHPGKGVKSPGEKSRY). Residues 67-108 (ATPQAPRPTPSAPRPALGRPPVKRRLDLETDHQYLAESSGPA) are cyclin A:CDK2 binding. The tract at residues 89 to 191 (KRRLDLETDH…KKSKNHIQWL (103 aa)) is interaction with BIRC2/c-IAP1. The DNA-binding element occupies 110–194 (GRGRHPGKGV…KNHIQWLGSH (85 aa)). K117, K120, and K125 each carry N6-acetyllysine. The segment at 153–174 (LNWAAEVLKVQKRRIYDITNVL) is leucine-zipper. The DEF box motif lies at 158–194 (EVLKVQKRRIYDITNVLEGIQLIAKKSKNHIQWLGSH). K185 is subject to N6-methyllysine; by SETD7. Positions 192-382 (GSHTTVGVGG…RLSPLVAADS (191 aa)) are required for interaction with TRIM28. A dimerization region spans residues 195–284 (TTVGVGGRLE…AVDSSENFQI (90 aa)). The segment at 300–349 (EETVGGISPGKTPSQEVTSEEENRATDSATIVSPPPSSPPSSLTTDPSQS) is disordered. Residues 339–349 (PSSLTTDPSQS) are compositionally biased toward low complexity. At S364 the chain carries Phosphoserine; by CHEK2. The interval 368-437 (PVDEDRLSPL…DFGDLTPLDF (70 aa)) is transactivation. S375 is modified (phosphoserine). At S403 the chain carries Phosphoserine; by GSK3-beta. Residues 409–426 (LDYHFGLEEGEGIRDLFD) form an RB1 binding region. T433 is modified (phosphothreonine; by GSK3-beta).

The protein belongs to the E2F/DP family. Component of the DRTF1/E2F transcription factor complex. Forms heterodimers with DP family members. The E2F1 complex binds specifically hypophosphorylated RB1, the interaction represses E2F1-driven transcription. During the cell cycle, RB1 becomes phosphorylated in mid-to-late G1 phase, detaches from the DRTF1/E2F complex, rendering E2F transcriptionally active. Viral oncoproteins, notably E1A, T-antigen and HPV E7, are capable of sequestering RB1, thus releasing the active complex. Interacts with TRRAP, which probably mediates its interaction with histone acetyltransferase complexes, leading to transcription activation. Binds TOPBP1 and EAPP. Interacts with ARID3A. Interacts with TRIM28; the interaction inhibits E2F1 acetylation through recruiting HDAC1 and represses its transcriptional activity. Interaction with KAT2B; the interaction acetylates E2F1 enhancing its DNA-binding and transcriptional activity. Interacts with BIRC2/c-IAP1 (via BIR domains). The complex TFDP1:E2F1 interacts with CEBPA; the interaction prevents CEBPA binding to target genes promoters and represses its transcriptional activity. Interacts with RRP1B. Interacts with HCFC1. Interacts with KMT2E; the interaction is probably indirect and is mediated via HCFC1. Interacts with DCAF5 and L3MBTL3; the interaction requires methylation at Lys-185 and is necessary to target E2F1 for ubiquitination by the CRL4-DCAF5 E3 ubiquitin ligase complex. In terms of assembly, (Microbial infection) Interacts with human cytomegalovirus/HHV-5 protein UL123. Phosphorylated by CDK2 and cyclin A-CDK2 in the S-phase. Phosphorylation at Ser-364 by CHEK2 stabilizes E2F1 upon DNA damage and regulates its effect on transcription and apoptosis. Phosphorylation at Ser-403 by GSK3B promotes interaction with USP11, leading to its deubiquitination and stabilization. In terms of processing, ubiquitinated via 'Lys-63'-linked ubiquitin, leading to its degradation. Deubiquitinated by USP11 following phosphorylation by GSK3B, promoting its stability. Post-translationally, acetylation stimulates DNA-binding. Enhanced under stress conditions such as DNA damage and inhibited by retinoblastoma protein RB1. Regulated by KAP1/TRIM28 which recruits HDAC1 to E2F1 resulting in deacetylation. Acetylated by P/CAF/KAT2B. Methylation at Lys-185 by SETD7 promotes E2F1 ubiquitin-dependent proteasomal degradation.

It is found in the nucleus. BIRC2/c-IAP1 stimulates its transcriptional activity. In terms of biological role, transcription activator that binds DNA cooperatively with DP proteins through the E2 recognition site, 5'-TTTC[CG]CGC-3' found in the promoter region of a number of genes whose products are involved in cell cycle regulation or in DNA replication. The DRTF1/E2F complex functions in the control of cell-cycle progression from G1 to S phase. E2F1 binds preferentially RB1 in a cell-cycle dependent manner. It can mediate both cell proliferation and TP53/p53-dependent apoptosis. Blocks adipocyte differentiation by binding to specific promoters repressing CEBPA binding to its target gene promoters. Directly activates transcription of PEG10. Positively regulates transcription of RRP1B. This chain is Transcription factor E2F1, found in Homo sapiens (Human).